Reading from the N-terminus, the 353-residue chain is ATP-dependent kinase YFH7 (353 aa).

Residue 31–39 (GSPGSGKST) coordinates ATP.

This sequence belongs to the YFH7 family.

Functionally, ATP-dependent kinase that could be involved in endoplasmic reticulum membrane assembly. The chain is ATP-dependent kinase YFH7 (YFH7) from Saccharomyces cerevisiae (strain RM11-1a) (Baker's yeast).